The sequence spans 254 residues: rRNA N-glycosylase sapovaccarin-S1 (254 aa).

Belongs to the ribosome-inactivating protein family. Type 1 RIP subfamily. Expressed in seeds; most abundant in the perisperm.

It carries out the reaction Endohydrolysis of the N-glycosidic bond at one specific adenosine on the 28S rRNA.. Functionally, exhibits N-glycosylase activity. Catalyzes the release of one adenine from a ribosome. Acts as a ribosome-inactivating protein and inhibits protein synthesis in a rabbit-reticulocyte lysate system and in various cell lines (in vitro). Induces cell death in Huh-7 liver cells. May contribute to the protection against plant pests and predators or play a role in regulating the death of plant cells. The protein is rRNA N-glycosylase sapovaccarin-S1 of Gypsophila vaccaria (Cow soapwort).